Here is a 106-residue protein sequence, read N- to C-terminus: Acidic phospholipase A2 PhTX-III (106 aa).

The Ca(2+) site is built by tyrosine 23, glycine 25, and glycine 27. Cystine bridges form between cysteine 24–cysteine 40, cysteine 39–cysteine 75, cysteine 45–cysteine 106, cysteine 46–cysteine 68, and cysteine 55–cysteine 66. Residue histidine 43 is part of the active site. Aspartate 44 is a binding site for Ca(2+). Residue aspartate 69 is part of the active site.

Ca(2+) serves as cofactor. Expressed by the venom gland.

The protein resides in the secreted. It catalyses the reaction a 1,2-diacyl-sn-glycero-3-phosphocholine + H2O = a 1-acyl-sn-glycero-3-phosphocholine + a fatty acid + H(+). With respect to regulation, partially inhibited by magnesium ions and completely inhibited by zinc ions These divalent cations may act as competitive antagonists of the cofactor. In terms of biological role, snake venom phospholipase A2 (PLA2) that induces inflammatory response, with local edema and release of cytokines IL-1 alpha, IL-6 and TNF-alpha. Does not exhibit myotoxic, anticoagulant and antibacterial effects. Release of pro-inflammatory cytokines may be due to mast cell degranulation, and edema may be induced by arachidonic acid that results from the PLA2 catalytic activity. PLA2 catalyzes the calcium-dependent hydrolysis of the 2-acyl groups in 3-sn-phosphoglycerides. This is Acidic phospholipase A2 PhTX-III from Bothrocophias hyoprora (Amazonian hognose viper).